Consider the following 176-residue polypeptide: Ribosome maturation factor RimM (176 aa).

The PRC barrel domain occupies 97–176 (EDEFYWRDLI…QILVDWDPDF (80 aa)).

It belongs to the RimM family. Binds ribosomal protein uS19.

It localises to the cytoplasm. Functionally, an accessory protein needed during the final step in the assembly of 30S ribosomal subunit, possibly for assembly of the head region. Essential for efficient processing of 16S rRNA. May be needed both before and after RbfA during the maturation of 16S rRNA. It has affinity for free ribosomal 30S subunits but not for 70S ribosomes. This Shewanella oneidensis (strain ATCC 700550 / JCM 31522 / CIP 106686 / LMG 19005 / NCIMB 14063 / MR-1) protein is Ribosome maturation factor RimM.